The chain runs to 1029 residues: mRNA 3'-end-processing protein rna14 (1029 aa).

2 disordered regions span residues 1 to 177 (MAEE…PDVS) and 225 to 251 (GNVQ…PHDR). The segment covering 21–32 (VDYKAVEEHGAD) has biased composition (basic and acidic residues). 2 stretches are compositionally biased toward polar residues: residues 43-79 (KTLQ…NSVQ) and 104-119 (TSTM…QPKT). Positions 127-140 (VEDEDEDDAGDADY) are enriched in acidic residues. The span at 153–175 (TVATNVPQQSVSGNENEASSTPD) shows a compositional bias: polar residues. Low complexity predominate over residues 229 to 243 (DSATATPTPDSPSTS). HAT repeat units follow at residues 281-313 (NRFD…MESE), 315-346 (NDLY…YVRR), 357-392 (QARR…FIKS), 406-439 (QKMD…FEMG), 469-509 (ITRD…WEKG), and 521-553 (AFKG…FCFL). Disordered stretches follow at residues 634 to 664 (TFAK…ESVK), 853 to 951 (TAVR…GSPA), and 996 to 1023 (IPLP…SPSL). The segment covering 894–908 (SPKRPLEDFDDDYNR) has biased composition (basic and acidic residues). Composition is skewed to polar residues over residues 932 to 949 (RSQL…SQGS) and 1006 to 1023 (GTTQ…SPSL).

It localises to the nucleus. The protein localises to the cytoplasm. In terms of biological role, component of the cleavage factor IA (CFIA) complex, which is involved in the endonucleolytic cleavage during polyadenylation-dependent pre-mRNA 3'-end formation. The polypeptide is mRNA 3'-end-processing protein rna14 (rna14) (Aspergillus fumigatus (strain ATCC MYA-4609 / CBS 101355 / FGSC A1100 / Af293) (Neosartorya fumigata)).